The chain runs to 556 residues: Arginine--tRNA ligase (556 aa).

A 'HIGH' region motif is present at residues 129-139; it reads ANPTGPLHVGH.

Belongs to the class-I aminoacyl-tRNA synthetase family. As to quaternary structure, monomer.

It is found in the cytoplasm. The catalysed reaction is tRNA(Arg) + L-arginine + ATP = L-arginyl-tRNA(Arg) + AMP + diphosphate. The polypeptide is Arginine--tRNA ligase (Desulfosudis oleivorans (strain DSM 6200 / JCM 39069 / Hxd3) (Desulfococcus oleovorans)).